Here is a 79-residue protein sequence, read N- to C-terminus: Sec-independent protein translocase protein TatA (79 aa).

A helical transmembrane segment spans residues 1-21 (MGSLSIWHWLIVLLIVALVFG). The interval 46-79 (ADAPAAEAQQRELPRNGAVDVEAKEKTPRSGDYR) is disordered. The segment covering 66–79 (VEAKEKTPRSGDYR) has biased composition (basic and acidic residues).

Belongs to the TatA/E family. As to quaternary structure, the Tat system comprises two distinct complexes: a TatABC complex, containing multiple copies of TatA, TatB and TatC subunits, and a separate TatA complex, containing only TatA subunits. Substrates initially bind to the TatABC complex, which probably triggers association of the separate TatA complex to form the active translocon.

It is found in the cell inner membrane. Its function is as follows. Part of the twin-arginine translocation (Tat) system that transports large folded proteins containing a characteristic twin-arginine motif in their signal peptide across membranes. TatA could form the protein-conducting channel of the Tat system. This Paraburkholderia phytofirmans (strain DSM 17436 / LMG 22146 / PsJN) (Burkholderia phytofirmans) protein is Sec-independent protein translocase protein TatA.